Here is a 361-residue protein sequence, read N- to C-terminus: Glyceraldehyde-3-phosphate dehydrogenase, glycosomal (361 aa).

Residues 13–14 (RI), D39, Q92, and S135 contribute to the NAD(+) site. Residues 166–168 (SCT), T198, 227–228 (TG), and R250 contribute to the D-glyceraldehyde 3-phosphate site. Residue C167 is the Nucleophile of the active site. Residue N336 participates in NAD(+) binding. Positions 359–361 (SKM) match the Microbody targeting signal motif.

The protein belongs to the glyceraldehyde-3-phosphate dehydrogenase family. In terms of assembly, homotetramer.

It localises to the glycosome. It catalyses the reaction D-glyceraldehyde 3-phosphate + phosphate + NAD(+) = (2R)-3-phospho-glyceroyl phosphate + NADH + H(+). It functions in the pathway carbohydrate degradation; glycolysis; pyruvate from D-glyceraldehyde 3-phosphate: step 1/5. The sequence is that of Glyceraldehyde-3-phosphate dehydrogenase, glycosomal (GAPG) from Leishmania mexicana.